A 315-amino-acid chain; its full sequence is Ribosomal RNA small subunit methyltransferase H (315 aa).

Residues 34–36 (GGH), aspartate 53, aspartate 100, and histidine 107 contribute to the S-adenosyl-L-methionine site.

Belongs to the methyltransferase superfamily. RsmH family.

The protein resides in the cytoplasm. The catalysed reaction is cytidine(1402) in 16S rRNA + S-adenosyl-L-methionine = N(4)-methylcytidine(1402) in 16S rRNA + S-adenosyl-L-homocysteine + H(+). In terms of biological role, specifically methylates the N4 position of cytidine in position 1402 (C1402) of 16S rRNA. This chain is Ribosomal RNA small subunit methyltransferase H, found in Treponema denticola (strain ATCC 35405 / DSM 14222 / CIP 103919 / JCM 8153 / KCTC 15104).